A 151-amino-acid polypeptide reads, in one-letter code: MERTFVMVKPDGVQRGLVGEVIGRLERKGLKIVAMKMLWIAREMAENHYAEHREKPFFSALVDYITSGPVVAMVVEGKNAIKVVRTLVGATNPAEAAPGTIRGDFGLDVGRNVVHASDSPQSAEREISLFFSDDEIVNWEKADEDWIYEER.

ATP-binding residues include Lys-9, Phe-57, Arg-85, Thr-91, Arg-102, and Asn-112. Catalysis depends on His-115, which acts as the Pros-phosphohistidine intermediate.

This sequence belongs to the NDK family. Mg(2+) serves as cofactor.

It localises to the cytoplasm. It carries out the reaction a 2'-deoxyribonucleoside 5'-diphosphate + ATP = a 2'-deoxyribonucleoside 5'-triphosphate + ADP. The catalysed reaction is a ribonucleoside 5'-diphosphate + ATP = a ribonucleoside 5'-triphosphate + ADP. In terms of biological role, major role in the synthesis of nucleoside triphosphates other than ATP. The ATP gamma phosphate is transferred to the NDP beta phosphate via a ping-pong mechanism, using a phosphorylated active-site intermediate. This is Nucleoside diphosphate kinase from Archaeoglobus fulgidus (strain ATCC 49558 / DSM 4304 / JCM 9628 / NBRC 100126 / VC-16).